The primary structure comprises 1086 residues: NAD(P) transhydrogenase, mitochondrial (1086 aa).

A mitochondrion-targeting transit peptide spans M1–W43. Topologically, residues C44–T474 are mitochondrial matrix. The residue at position 70 (K70) is an N6-acetyllysine. Residue K117 is modified to N6-succinyllysine. Position 182–184 (R182–T184) interacts with NAD(+). K224 carries the post-translational modification N6-succinyllysine. NAD(+)-binding positions include V237, D257–R259, and G287. K294 carries the N6-succinyllysine modification. E300 and L319 together coordinate NAD(+). An N6-succinyllysine modification is found at K331. N6-acetyllysine is present on K397. 4 helical membrane-spanning segments follow: residues S475–A493, M501–P521, L527–M546, and G558–T578. Residues Q579 to N595 are Mitochondrial matrix-facing. Transmembrane regions (helical) follow at residues Y596–G616, I622–G642, L646–L666, L672–A691, and L702–Y722. At I723–K739 the chain is on the cytoplasmic side. Transmembrane regions (helical) follow at residues I740 to Y760, H778 to M797, F801 to G819, V833 to L853, and L857 to A879. The Mitochondrial matrix segment spans residues M880 to K1086. NADP(+)-binding positions include Y933, V965–P970, G1007–T1011, G1026–M1027, K1042–Y1049, and D1068–A1069. An N6-succinyllysine modification is found at K1079.

The protein in the N-terminal section; belongs to the AlaDH/PNT family. This sequence in the C-terminal section; belongs to the PNT beta subunit family. In terms of assembly, homodimer.

The protein localises to the mitochondrion inner membrane. The enzyme catalyses NAD(+) + NADPH + H(+)(in) = NADH + NADP(+) + H(+)(out). In terms of biological role, the transhydrogenation between NADH and NADP is coupled to respiration and ATP hydrolysis and functions as a proton pump across the membrane. May play a role in reactive oxygen species (ROS) detoxification in the adrenal gland. This Ovis aries (Sheep) protein is NAD(P) transhydrogenase, mitochondrial (NNT).